The sequence spans 392 residues: Small ribosomal subunit protein bS1 (392 aa).

4 consecutive S1 motif domains span residues 16–90, 108–173, 194–262, and 279–348; these read GDKV…LSKR, DEII…LSRK, GDVI…LSIK, and DDVI…LSIK.

It belongs to the bacterial ribosomal protein bS1 family.

Its function is as follows. Binds mRNA; thus facilitating recognition of the initiation point. It is needed to translate mRNA with a short Shine-Dalgarno (SD) purine-rich sequence. This Staphylococcus haemolyticus (strain JCSC1435) protein is Small ribosomal subunit protein bS1 (rpsA).